A 264-amino-acid chain; its full sequence is 3-deoxy-manno-octulosonate cytidylyltransferase (264 aa).

This sequence belongs to the KdsB family.

Its subcellular location is the cytoplasm. It catalyses the reaction 3-deoxy-alpha-D-manno-oct-2-ulosonate + CTP = CMP-3-deoxy-beta-D-manno-octulosonate + diphosphate. It functions in the pathway nucleotide-sugar biosynthesis; CMP-3-deoxy-D-manno-octulosonate biosynthesis; CMP-3-deoxy-D-manno-octulosonate from 3-deoxy-D-manno-octulosonate and CTP: step 1/1. The protein operates within bacterial outer membrane biogenesis; lipopolysaccharide biosynthesis. Its function is as follows. Activates KDO (a required 8-carbon sugar) for incorporation into bacterial lipopolysaccharide in Gram-negative bacteria. The protein is 3-deoxy-manno-octulosonate cytidylyltransferase of Marinomonas sp. (strain MWYL1).